Consider the following 270-residue polypeptide: NAD kinase (270 aa).

The active-site Proton acceptor is Asp45. Residues 45-46 (DG), 121-122 (NE), Arg147, Asp149, 160-165 (TAYNKS), and Ala184 each bind NAD(+).

Belongs to the NAD kinase family. A divalent metal cation serves as cofactor.

The protein localises to the cytoplasm. The enzyme catalyses NAD(+) + ATP = ADP + NADP(+) + H(+). Its function is as follows. Involved in the regulation of the intracellular balance of NAD and NADP, and is a key enzyme in the biosynthesis of NADP. Catalyzes specifically the phosphorylation on 2'-hydroxyl of the adenosine moiety of NAD to yield NADP. This Limosilactobacillus reuteri subsp. reuteri (strain JCM 1112) (Lactobacillus reuteri) protein is NAD kinase.